A 461-amino-acid chain; its full sequence is tRNA-2-methylthio-N(6)-dimethylallyladenosine synthase (461 aa).

In terms of domain architecture, MTTase N-terminal spans 18 to 134 (KHIYIQTLGC…LPDFISRIEK (117 aa)). [4Fe-4S] cluster contacts are provided by Cys27, Cys63, Cys97, Cys172, Cys176, and Cys179. The region spanning 158-388 (CNGQVSSFVT…QALQEQHTLE (231 aa)) is the Radical SAM core domain. In terms of domain architecture, TRAM spans 391–454 (KAMEGKQEDV…LHSLRGEMLC (64 aa)).

This sequence belongs to the methylthiotransferase family. MiaB subfamily. Monomer. Requires [4Fe-4S] cluster as cofactor.

It localises to the cytoplasm. It carries out the reaction N(6)-dimethylallyladenosine(37) in tRNA + (sulfur carrier)-SH + AH2 + 2 S-adenosyl-L-methionine = 2-methylsulfanyl-N(6)-dimethylallyladenosine(37) in tRNA + (sulfur carrier)-H + 5'-deoxyadenosine + L-methionine + A + S-adenosyl-L-homocysteine + 2 H(+). In terms of biological role, catalyzes the methylthiolation of N6-(dimethylallyl)adenosine (i(6)A), leading to the formation of 2-methylthio-N6-(dimethylallyl)adenosine (ms(2)i(6)A) at position 37 in tRNAs that read codons beginning with uridine. The sequence is that of tRNA-2-methylthio-N(6)-dimethylallyladenosine synthase from Syntrophus aciditrophicus (strain SB).